A 346-amino-acid polypeptide reads, in one-letter code: Sensor protein kinase GraS (346 aa).

2 helical membrane passes run 15–35 (MNWI…SLID) and 43–63 (LFYI…LTYF). The Histidine kinase domain occupies 126 to 332 (EFVHDIKTPV…TVRLIFPLQN (207 aa)).

In terms of assembly, interacts with GraX.

Its subcellular location is the cell membrane. The enzyme catalyses ATP + protein L-histidine = ADP + protein N-phospho-L-histidine.. Functionally, member of the two-component regulatory system GraR/GraS involved in resistance against cationic antimicrobial peptides (CAMPs). Functions as a sensor protein kinase which phosphorylates GraR through the auxiliary protein GraX. In turn, GraR up-regulates many genes such as adhesins, exoproteins, transporters, toxins, and proteins involved in cell wall synthesis. Down-regulates the expression of many genes involved in RNA and amino acid synthesis or glycolysis. The sequence is that of Sensor protein kinase GraS (graS) from Staphylococcus aureus (strain bovine RF122 / ET3-1).